The sequence spans 103 residues: Large ribosomal subunit protein uL24 (103 aa).

It belongs to the universal ribosomal protein uL24 family. In terms of assembly, part of the 50S ribosomal subunit.

In terms of biological role, one of two assembly initiator proteins, it binds directly to the 5'-end of the 23S rRNA, where it nucleates assembly of the 50S subunit. Functionally, one of the proteins that surrounds the polypeptide exit tunnel on the outside of the subunit. The polypeptide is Large ribosomal subunit protein uL24 (Pediococcus pentosaceus (strain ATCC 25745 / CCUG 21536 / LMG 10740 / 183-1w)).